The primary structure comprises 277 residues: Thymidylate synthase (277 aa).

Arg-21 serves as a coordination point for dUMP. Residue His-51 participates in (6R)-5,10-methylene-5,6,7,8-tetrahydrofolate binding. 126 to 127 (RR) provides a ligand contact to dUMP. Catalysis depends on Cys-159, which acts as the Nucleophile. DUMP is bound by residues 179-182 (RSSD), Asn-190, and 220-222 (HAY). Asp-182 provides a ligand contact to (6R)-5,10-methylene-5,6,7,8-tetrahydrofolate. Ala-276 provides a ligand contact to (6R)-5,10-methylene-5,6,7,8-tetrahydrofolate.

It belongs to the thymidylate synthase family. Bacterial-type ThyA subfamily. Homodimer.

The protein resides in the cytoplasm. The catalysed reaction is dUMP + (6R)-5,10-methylene-5,6,7,8-tetrahydrofolate = 7,8-dihydrofolate + dTMP. It functions in the pathway pyrimidine metabolism; dTTP biosynthesis. Its function is as follows. Catalyzes the reductive methylation of 2'-deoxyuridine-5'-monophosphate (dUMP) to 2'-deoxythymidine-5'-monophosphate (dTMP) while utilizing 5,10-methylenetetrahydrofolate (mTHF) as the methyl donor and reductant in the reaction, yielding dihydrofolate (DHF) as a by-product. This enzymatic reaction provides an intracellular de novo source of dTMP, an essential precursor for DNA biosynthesis. This Pseudomonas fluorescens (strain SBW25) protein is Thymidylate synthase.